The primary structure comprises 771 residues: Assimilatory nitrate reductase electron transfer subunit (771 aa).

FAD is bound at residue 43–79 (YNRILLSSVLQGEASLDDITLNSKDWYDKHGITLYTG). [2Fe-2S] cluster is bound by residues Cys-414, Cys-416, Cys-449, and Cys-452.

The cofactor is FAD. [2Fe-2S] cluster serves as cofactor.

Functionally, required for nitrate assimilation. The chain is Assimilatory nitrate reductase electron transfer subunit (nasB) from Bacillus subtilis (strain 168).